The primary structure comprises 612 residues: Apoptosis-inducing factor 1, mitochondrial (612 aa).

Short sequence motifs (mitochondrial localization signal) lie at residues 1–30 (MFRC…PKQR) and 62–88 (KMDN…KTIK). Residues 1-54 (MFRCGGLAGAFKQKLVPLVRTVYVQRPKQRNRLPGNLFQQWRVPLELQMARQMA) constitute a mitochondrion transit peptide. The propeptide at 55–101 (SSGSSGGKMDNSVLVLIVGLSTIGAGAYAYKTIKEDQKRYNERVMGL) is removed in mature form. An N6-succinyllysine modification is found at K108. At S115 the chain carries Phosphoserine. An FAD-dependent oxidoreductase region spans residues 133–482 (FLLIGGGTAA…KPYWHQSMFW (350 aa)). FAD-binding positions include 137–141 (GGGTA), 163–164 (ED), R171, and K176. W195 contacts NAD(+). V232 is an FAD binding site. K254 is covalently cross-linked (Glycyl lysine isopeptide (Lys-Gly) (interchain with G-Cter in ubiquitin)). The residue at position 267 (S267) is a Phosphoserine. R284 serves as a coordination point for FAD. NAD(+) is bound by residues 307–310 (GGFL), E335, and K341. S370 carries the phosphoserine modification. K387 carries the post-translational modification N6-acetyllysine. Residue G398 coordinates NAD(+). Position 437 (D437) interacts with FAD. The short motif at 445 to 450 (KLGRRR) is the Nuclear localization signal element. NAD(+) is bound by residues 452-453 (EH), W482, and E492. FAD contacts are provided by residues 453 to 454 (HH) and W482. The span at 512–528 (AQDNPKSATEQSGTGIR) shows a compositional bias: polar residues. The interval 512–551 (AQDNPKSATEQSGTGIRSESETESEASEITIPPSAPAVPQ) is disordered. T520 carries the post-translational modification Phosphothreonine. Phosphoserine is present on residues S523 and S529. Residue N582 participates in NAD(+) binding. K592 carries the N6-acetyllysine modification.

This sequence belongs to the FAD-dependent oxidoreductase family. In terms of assembly, monomer (oxidized form). Homodimer (reduced form). Upon reduction with NADH, undergoes dimerization and forms tight, long-lived FADH2-NAD charge transfer complexes (CTC) resistant to oxidation. Also dimerizes with isoform 3 preventing its release from mitochondria. Interacts with XIAP/BIRC4. Interacts (via N-terminus) with EIF3G (via C-terminus). Interacts with PRELID1. Interacts with CHCHD4; the interaction increases in presence of NADH. Interacts with processed form of PARP1 (Poly [ADP-ribose] polymerase 1, processed C-terminus); interaction is mediated with poly-ADP-ribose chains attached to PARP1, promoting translocation into the nucleus. The cofactor is FAD. Under normal conditions, a 54-residue N-terminal segment is first proteolytically removed during or just after translocation into the mitochondrial intermembrane space (IMS) by the mitochondrial processing peptidase (MPP) to form the inner-membrane-anchored mature form (AIFmit). During apoptosis, it is further proteolytically processed at amino-acid position 101 leading to the generation of the mature form, which is confined to the mitochondrial IMS in a soluble form (AIFsol). AIFsol is released to the cytoplasm in response to specific death signals, and translocated to the nucleus, where it induces nuclear apoptosis in a caspase-independent manner. In terms of processing, ubiquitination by XIAP/BIRC4 does not lead to proteasomal degradation. Ubiquitination at Lys-254 by XIAP/BIRC4 blocks its ability to bind DNA and induce chromatin degradation, thereby inhibiting its ability to induce cell death. Expressed in cortical neurons (at protein level). In terms of tissue distribution, expressed in liver (at protein level).

The protein localises to the mitochondrion intermembrane space. It localises to the mitochondrion inner membrane. The protein resides in the cytoplasm. It is found in the nucleus. Its subcellular location is the perinuclear region. The protein localises to the mitochondrion. It localises to the cytosol. The catalysed reaction is A + NADH + H(+) = AH2 + NAD(+). Its function is as follows. Functions both as NADH oxidoreductase and as regulator of apoptosis. In response to apoptotic stimuli, it is released from the mitochondrion intermembrane space into the cytosol and to the nucleus, where it functions as a proapoptotic factor in a caspase-independent pathway. Release into the cytoplasm is mediated upon binding to poly-ADP-ribose chains. The soluble form (AIFsol) found in the nucleus induces 'parthanatos' i.e. caspase-independent fragmentation of chromosomal DNA. Binds to DNA in a sequence-independent manner. Interacts with EIF3G, and thereby inhibits the EIF3 machinery and protein synthesis, and activates caspase-7 to amplify apoptosis. Plays a critical role in caspase-independent, pyknotic cell death in hydrogen peroxide-exposed cells. In contrast, participates in normal mitochondrial metabolism. Plays an important role in the regulation of respiratory chain biogenesis by interacting with CHCHD4 and controlling CHCHD4 mitochondrial import. In Mus musculus (Mouse), this protein is Apoptosis-inducing factor 1, mitochondrial.